We begin with the raw amino-acid sequence, 164 residues long: UPF0114 protein KPN78578_33570 (164 aa).

4 helical membrane-spanning segments follow: residues 15-35 (LLAP…IKFF), 53-73 (MILT…LVMV), 109-126 (VAAS…RVFM), and 136-156 (LMWY…MGYL).

It belongs to the UPF0114 family.

The protein resides in the cell membrane. In Klebsiella pneumoniae subsp. pneumoniae (strain ATCC 700721 / MGH 78578), this protein is UPF0114 protein KPN78578_33570.